Here is a 599-residue protein sequence, read N- to C-terminus: UvrABC system protein C (599 aa).

Positions 18 to 96 constitute a GIY-YIG domain; that stretch reads QLPGVYRMLG…IKQHRPPYNI (79 aa). The UVR domain occupies 207-242; sequence KELNQELIAKMEEAAEQLAFEKAMFYRDRLGLLREV.

It belongs to the UvrC family. In terms of assembly, interacts with UvrB in an incision complex.

The protein localises to the cytoplasm. Its function is as follows. The UvrABC repair system catalyzes the recognition and processing of DNA lesions. UvrC both incises the 5' and 3' sides of the lesion. The N-terminal half is responsible for the 3' incision and the C-terminal half is responsible for the 5' incision. This is UvrABC system protein C from Acinetobacter baylyi (strain ATCC 33305 / BD413 / ADP1).